The following is a 1567-amino-acid chain: MPTQVQMRPLLRIFAEPILLILIFLFTLGAKGEKVLQETFLGLQEAPIHDLGDLRLVPSRLDFGTWSVGQARSQTVTLFNQHSNRTLQLNAVAGPSPAFYSSFLGTREVPPQGNTTFNVVFLPRQLGAIAADLLIHTSFGQAELAVQGEGSECPYRLKPLVGIKAPMNATLTPEIHMYNPHERPLQILEIYSSGGEFQLELPSGGSEGPQNLWKIPPHTLKPVIRISFHGRTAGNHSAYIRIKVAEQELDIFIPVEFEILPRHSVYARNPLADFGRVATLNAPDALQFKLDVRNDESRQLFGSYLRQIPGLSFDANNTSIVLDASLFEGDEIINDLLVINSNQSSTSPGADQPFTVLVRAEIFHGGLTFDRNATRFVTTSPEGVEGEPLERKRSLVVRNKFAIPLMLFNVSLTEPIDESILEVTLVGDPRILIQPDESVELLRLNLLNDQVPFKSFLRIETNVTVFKLPLVSCSGRLHVSTQPIVLNFRQESLEKAAYNLELDLGTVPFAEMSRDGFVILRNDNPVPVRITNWFFKHPKTVYSQSTFLGCRATAIGHPVSVENDTKGWHLCTEIRAGESAVFKVAIQTYEADATFGTLKVWTPYEVIRVRVKFEASVGHLEIDQEQLSFKNCFPGKMCTAVLSIRSSFTHPVHVKGISFALPVGLRFKDFNAKGTTIAPQTLTKVGRIYFDPASVCRNNCYIRESTNDLAIFPSVPGGGNGNSGVINNNLLYDGVELRQRTELFRQLRRQLSSMSLTLHSEELPPLELDFSITIEWPKLVQFQPIPPTPAIEVGQVQRQWITLTNPSQSPLLLDYFLSDPAFARRTQLSLPHEVIDVSSTSCYLTDKEVFSLPEAGDPILLPGGASLTIPITFSAQLPEKYCTLLHVRSNLTLYEAVWLQARAVQSQFRFGNRRPGAASPLLFEMATNQFQGCQSGNEAVVVTRSFTARNSGVIPIRIEGFLIGSLPCEDFGFKVMDCAGFDLGENEARKVEIAFSADFTTSAVKRSLTLLTNLTYDISYKLLAQMPAESVELCASLLVRPGWESSLKNAALVVLLASFGLVLVAAVFDAKAIMVQQNAYDAARNKGPLQPTFNLRNIVKLQAEEAAAKAESVQQQQKVKNGQLKELRKRTVVNSTNSKSKSKSSWSPWSMDMNALSKHLQKAKPKTVVSTPVTPPAASAPAAAPVPLPEAKPVKKSSTPSPQGVPISVQVRPQKKVKPTPAVVLGTTKPKQEVSTPVADQHEKSLAKSSPPQQENISPKPNKPPEQRVLKEQNGSAKKMGKTPGRERERERRSKDQKLTNGTGAGVGFRKPERKQRQKLNFGQTTNSTSPPESPDALKCISNPWETSSRVSFRDVLRTPQMAPTDNGFDWNHATSSSDLGPIGDNRKNATPPMVTSLWEPLSATASNSLFANTEVDFITPDAIYEQREREKPQWEQRSDLVMRQQLLLQQPQKLEFQLRQQEKISLLANMDPSNWATNWSPLGYSTWPNATAGIGVMRPPPGLEQSARQTHNLAQEQVSAGPASGTGAALHGESLPTQYDPFTSPSSIWSDTWRQSSQRNNHNHMN.

The N-terminal stretch at 1 to 32 is a signal peptide; the sequence is MPTQVQMRPLLRIFAEPILLILIFLFTLGAKG. Topologically, residues 33-1049 are lumenal; it reads EKVLQETFLG…RPGWESSLKN (1017 aa). Residues 55–228 form a papD-L domain region; it reads RLVPSRLDFG…TLKPVIRISF (174 aa). N-linked (GlcNAc...) asparagine glycosylation is found at asparagine 84, asparagine 114, asparagine 168, asparagine 235, asparagine 316, asparagine 317, asparagine 342, asparagine 372, asparagine 409, asparagine 462, asparagine 563, asparagine 890, and asparagine 1013. The chain crosses the membrane as a helical span at residues 1050–1070; that stretch reads AALVVLLASFGLVLVAAVFDA. Residues 1071 to 1567 are Cytoplasmic-facing; the sequence is KAIMVQQNAY…SQRNNHNHMN (497 aa). A coiled-coil region spans residues 1096 to 1130; the sequence is RNIVKLQAEEAAAKAESVQQQQKVKNGQLKELRKR. Disordered stretches follow at residues 1112–1337, 1364–1386, and 1502–1567; these read SVQQ…SPDA, PTDNGFDWNHATSSSDLGPIGDN, and PGLE…NHMN. Composition is skewed to low complexity over residues 1132-1150 and 1166-1183; these read VVNSTNSKSKSKSSWSPWS and KTVVSTPVTPPAASAPAA. Residues serine 1201 and serine 1258 each carry the phosphoserine modification. Positions 1247-1259 are enriched in polar residues; that stretch reads AKSSPPQQENISP. The segment covering 1284-1298 has biased composition (basic and acidic residues); the sequence is PGRERERERRSKDQK. Residues 1319 to 1331 show a composition bias toward polar residues; it reads KLNFGQTTNSTSP. Composition is skewed to polar residues over residues 1507-1519 and 1536-1561; these read SARQTHNLAQEQV and LPTQYDPFTSPSSIWSDTWRQSSQRN.

Belongs to the TMEM131 family. In terms of assembly, may interact (via PapD-L domain) with collagen proteins (via C-terminus); the interaction is direct and is involved in assembly and TRAPPIII ER-to-Golgi transport complex-dependent secretion of collagen.

The protein resides in the membrane. Its function is as follows. Collagen binding transmembrane protein involved in collagen secretion, probably by recruiting the ER-to-Golgi transport complex TRAPPIII. This chain is Transmembrane protein 131 homolog, found in Drosophila melanogaster (Fruit fly).